We begin with the raw amino-acid sequence, 89 residues long: Small ribosomal subunit protein uS15 (89 aa).

The protein belongs to the universal ribosomal protein uS15 family. In terms of assembly, part of the 30S ribosomal subunit. Forms a bridge to the 50S subunit in the 70S ribosome, contacting the 23S rRNA.

One of the primary rRNA binding proteins, it binds directly to 16S rRNA where it helps nucleate assembly of the platform of the 30S subunit by binding and bridging several RNA helices of the 16S rRNA. Functionally, forms an intersubunit bridge (bridge B4) with the 23S rRNA of the 50S subunit in the ribosome. The polypeptide is Small ribosomal subunit protein uS15 (Streptococcus thermophilus (strain CNRZ 1066)).